Reading from the N-terminus, the 965-residue chain is Valine--tRNA ligase (965 aa).

The segment at 1-22 is disordered; it reads MENTPSHINKTEPSLDKTYSPQ. The 'HIGH' region signature appears at 56–66; sequence PNVTGSLHMGH. The 'KMSKS' region motif lies at 568 to 572; the sequence is KMSKS. Position 571 (K571) interacts with ATP. Residues 896-965 adopt a coiled-coil conformation; it reads LIDKATELDR…IEQQATIAAL (70 aa).

It belongs to the class-I aminoacyl-tRNA synthetase family. ValS type 1 subfamily. Monomer.

Its subcellular location is the cytoplasm. It catalyses the reaction tRNA(Val) + L-valine + ATP = L-valyl-tRNA(Val) + AMP + diphosphate. Functionally, catalyzes the attachment of valine to tRNA(Val). As ValRS can inadvertently accommodate and process structurally similar amino acids such as threonine, to avoid such errors, it has a 'posttransfer' editing activity that hydrolyzes mischarged Thr-tRNA(Val) in a tRNA-dependent manner. In Yersinia pseudotuberculosis serotype I (strain IP32953), this protein is Valine--tRNA ligase.